A 657-amino-acid polypeptide reads, in one-letter code: uncharacterized protein (657 aa).

Residues Ser-518 and His-631 each act as charge relay system in the active site.

This sequence belongs to the peptidase S9C family.

This is an uncharacterized protein from Bacillus subtilis (strain 168).